A 386-amino-acid polypeptide reads, in one-letter code: MRFLSTDMKDRNMLFAAITTNQPIRSKCSRLPDLHDFFPTNISQNFAITPNLDITPTPERIAGVTIVLQIEEYLGQNESEQGAVNLARTVLGARHRNGETWQGILEDIRAGGGMDNFIQNLPGAYPETPLDQFAIIPIIDLHVGNFYLSFTNEVLYMLLTVVLVVFLFFVVTKKGGGKSVPNAWQSLVELIYDFVLNLVNEQIGGLSGNVKQKFFPRISVTFTFSLFRNPQGMIPFSFTVTSHFLITLALSFSIFIGITIVGFQRHGLHFFSFLLPAGVPLPLAPFLVLLELISYCFRALSLGIRLFANMMAGHSLVKILSGFAWTMLFLNNIFYFIGDLGPLFIVLALTGLELGVAISQAHVSTISICIYLNDATNLHQNESFHN.

The next 4 helical transmembrane spans lie at 150–170 (FTNEVLYMLLTVVLVVFLFFV), 243–263 (HFLITLALSFSIFIGITIVGF), 270–290 (FFSFLLPAGVPLPLAPFLVLL), and 310–330 (MMAGHSLVKILSGFAWTMLFL).

The protein belongs to the ATPase A chain family. F-type ATPases have 2 components, CF(1) - the catalytic core - and CF(0) - the membrane proton channel. CF(1) has five subunits: alpha(3), beta(3), gamma(1), delta(1), epsilon(1). CF(0) has three main subunits: a, b and c.

Its subcellular location is the mitochondrion inner membrane. Mitochondrial membrane ATP synthase (F(1)F(0) ATP synthase or Complex V) produces ATP from ADP in the presence of a proton gradient across the membrane which is generated by electron transport complexes of the respiratory chain. F-type ATPases consist of two structural domains, F(1) - containing the extramembraneous catalytic core and F(0) - containing the membrane proton channel, linked together by a central stalk and a peripheral stalk. During catalysis, ATP synthesis in the catalytic domain of F(1) is coupled via a rotary mechanism of the central stalk subunits to proton translocation. Key component of the proton channel; it may play a direct role in the translocation of protons across the membrane. This chain is ATP synthase subunit a (ATP6), found in Triticum aestivum (Wheat).